Reading from the N-terminus, the 366-residue chain is Peroxisomal (S)-2-hydroxy-acid oxidase GLO4 (366 aa).

The region spanning 1–360 (MEDNLPVNVR…TRSHVMTEGD (360 aa)) is the FMN hydroxy acid dehydrogenase domain. An a 2-oxocarboxylate-binding site is contributed by Tyr-27. Residues 80–82 (PTG), Ser-109, 130–132 (QLY), and Thr-158 contribute to the FMN site. Tyr-132 lines the a 2-oxocarboxylate pocket. Position 167 (Arg-167) interacts with a 2-oxocarboxylate. Lys-231 and Ser-253 together coordinate FMN. The active-site Proton acceptor is the His-255. Arg-258 is a binding site for a 2-oxocarboxylate. FMN contacts are provided by residues 286–290 (DGGIR) and 309–310 (GR). The Microbody targeting signal motif lies at 364–366 (SLL).

Belongs to the FMN-dependent alpha-hydroxy acid dehydrogenase family. In terms of assembly, homotetramer. Binds to CATB and CATC; these interactions are disturbed by alpha-hydroxy-2-pyridinemethanesulfonic acid (HPMS) and salicylic acid (SA). FMN serves as cofactor.

The protein localises to the peroxisome. The enzyme catalyses a (2S)-2-hydroxycarboxylate + O2 = a 2-oxocarboxylate + H2O2. It participates in lipid metabolism; fatty acid metabolism. Oxidase that catalyzes the oxidation of a broad range of 2-hydroxyacids to the corresponding 2-oxoacids, with a reduction of O2 to H2O2. May be involved in a general medium- and long-chain fatty acid catabolic pathway such as alpha-oxidation. The protein is Peroxisomal (S)-2-hydroxy-acid oxidase GLO4 (GLO4) of Oryza sativa subsp. japonica (Rice).